The sequence spans 897 residues: MINNKPSLDWLENPEIFRVNRIDAHSDTWFYEKFEDVKLEDTMPLKQNLNGKWRFSYSENSSLRIKEFYKDEFDVSWIDYIEVPGHIQLQGYDKCQYINTMYPWEGHDELRPPHISKTYNPVGSYVTFFEVKDELKNKQTFISFQGVETAFYVWVNGEFVGYSEDTFTPSEFDITDYLREGENKLAVEVYKRSSASWIEDQDFWRFSGIFRDVYLYAVPETHVNDIFIKTDLYDDFKNAKLNAELKMIGNSETTVETYLEDKEGNKIAISEKIPFSDELTLYLDAQNINLWSAEEPNLYTLYILVNKKDGNLIEVVTQKIGFRHFEMKDKIMCLKWKRIIFKGVNRHEFSARRGRSITKEDMLWDIKFLKQHNINAVRTSHYPNQSLWYRLCDEYGIYLIDETNLESHGSWQKMGQIEPSWNVPGSLPQWQAAVLDRASSMVERDKNHPSVLIWSCGNESYAGEDIYQMSKYFRKKDPSRLVHYEGVTRCREFMTRRHESRMYAKAAEIEEYLNDNPKKPYISCEYMHSMGNSTGGMMKYTELEDKYLMYQGGFIWDYGDQALYRKLPDGKEVLAYGGDFTDRPTDYNFSGNGLIYADRTISPKAQEVKYLYQNVKLEPDEKGVTIKNQNLFVNTDKYDLYYIVERDGKLIKDGYLNVSVAPDEEKYIELPIGNYNFPEEIVLTTSLRLAQATLWAEKGYEIAFGQKVIKEKSDMNNHNSESKMKIIHGDVNIGVHGKDFKAIFSKQEGGIVSLRYNNKEFITRTPKTFYWRATTDNDRGNRHEFRCSQWLAATMGQKYVDFSVEEFDEKITLYYTYQLPTVPSTNVKITYEVSGEGIIKVNVKYKGVSGLPELPVLGMDFKLLAEFNSFSWYGMGPEENYIDRCEGAKLGIYESTQ.

The active-site Proton donor is the Glu459. The active-site Nucleophile is the Glu525.

The protein belongs to the glycosyl hydrolase 2 family.

The catalysed reaction is Hydrolysis of terminal non-reducing beta-D-galactose residues in beta-D-galactosides.. This is Beta-galactosidase (cbgA) from Clostridium acetobutylicum.